The sequence spans 334 residues: Photosystem II assembly protein Ycf48 (334 aa).

An N-terminal signal peptide occupies residues Met-1–Ala-22.

Belongs to the Ycf48 family. In terms of assembly, part of early PSII assembly complexes which includes D1 (psbA) and PsbI; not found in mature PSII. Binds to the lumenal side of PSII complexes. Interacts with YidC.

The protein localises to the cellular thylakoid lumen. In terms of biological role, a factor required for optimal assembly of photosystem II (PSII), acting in the early stages of PSII assembly. Also plays a role in replacement of photodamaged D1 (psbA). Assists YidC in synthesis of chlorophyll-binding proteins. This is Photosystem II assembly protein Ycf48 from Synechococcus sp. (strain JA-3-3Ab) (Cyanobacteria bacterium Yellowstone A-Prime).